A 904-amino-acid polypeptide reads, in one-letter code: Translation initiation factor IF-2 (904 aa).

Disordered stretches follow at residues 102-122 (TYVK…PDEE), 134-252 (RQRN…MVAG), and 267-316 (HLSA…ERPT). Basic and acidic residues predominate over residues 134–177 (RQRNLEEQQRLAESDRVRDEAIQRKREEEQAAKDRAEAERKAAE). Residues 178 to 230 (EAAAAASAPAPVADAPKPSAAAPAARLPSSPSSAPRAARPAGASPASRPAAPA) are compositionally biased toward low complexity. Positions 403–572 (SRPPVVTIMG…SLQAEVLELK (170 aa)) constitute a tr-type G domain. The tract at residues 412 to 419 (GHVDHGKT) is G1. A GTP-binding site is contributed by 412–419 (GHVDHGKT). The G2 stretch occupies residues 437–441 (GITQH). Residues 458 to 461 (DTPG) form a G3 region. Residues 458–462 (DTPGH) and 512–515 (NKID) each bind GTP. Positions 512 to 515 (NKID) are G4. A G5 region spans residues 548-550 (SAK).

The protein belongs to the TRAFAC class translation factor GTPase superfamily. Classic translation factor GTPase family. IF-2 subfamily.

It is found in the cytoplasm. One of the essential components for the initiation of protein synthesis. Protects formylmethionyl-tRNA from spontaneous hydrolysis and promotes its binding to the 30S ribosomal subunits. Also involved in the hydrolysis of GTP during the formation of the 70S ribosomal complex. The polypeptide is Translation initiation factor IF-2 (Xanthomonas axonopodis pv. citri (strain 306)).